The chain runs to 90 residues: Small ribosomal subunit protein uS17 (90 aa).

Belongs to the universal ribosomal protein uS17 family. As to quaternary structure, part of the 30S ribosomal subunit.

Functionally, one of the primary rRNA binding proteins, it binds specifically to the 5'-end of 16S ribosomal RNA. This chain is Small ribosomal subunit protein uS17, found in Cutibacterium acnes (strain DSM 16379 / KPA171202) (Propionibacterium acnes).